The following is a 432-amino-acid chain: UDP-N-acetylmuramate--L-alanine ligase (432 aa).

108 to 114 (GAHGKTS) is a binding site for ATP.

This sequence belongs to the MurCDEF family.

It is found in the cytoplasm. The enzyme catalyses UDP-N-acetyl-alpha-D-muramate + L-alanine + ATP = UDP-N-acetyl-alpha-D-muramoyl-L-alanine + ADP + phosphate + H(+). It participates in cell wall biogenesis; peptidoglycan biosynthesis. Its function is as follows. Cell wall formation. The polypeptide is UDP-N-acetylmuramate--L-alanine ligase (Bacillus pumilus (strain SAFR-032)).